Here is a 537-residue protein sequence, read N- to C-terminus: Lysine--tRNA ligase (537 aa).

Positions 30-38 (PSGNIHIGN) match the 'HIGH' region motif. Residues 276 to 280 (AMSSS) carry the 'KMSKS' region motif.

This sequence belongs to the class-I aminoacyl-tRNA synthetase family.

Its subcellular location is the cytoplasm. It carries out the reaction tRNA(Lys) + L-lysine + ATP = L-lysyl-tRNA(Lys) + AMP + diphosphate. This is Lysine--tRNA ligase from Methanosarcina barkeri (strain Fusaro / DSM 804).